A 379-amino-acid polypeptide reads, in one-letter code: UDP-4-amino-4-deoxy-L-arabinose--oxoglutarate aminotransferase (379 aa).

At K182 the chain carries N6-(pyridoxal phosphate)lysine.

It belongs to the DegT/DnrJ/EryC1 family. ArnB subfamily. In terms of assembly, homodimer. Pyridoxal 5'-phosphate serves as cofactor.

It carries out the reaction UDP-4-amino-4-deoxy-beta-L-arabinose + 2-oxoglutarate = UDP-beta-L-threo-pentopyranos-4-ulose + L-glutamate. It participates in nucleotide-sugar biosynthesis; UDP-4-deoxy-4-formamido-beta-L-arabinose biosynthesis; UDP-4-deoxy-4-formamido-beta-L-arabinose from UDP-alpha-D-glucuronate: step 2/3. The protein operates within bacterial outer membrane biogenesis; lipopolysaccharide biosynthesis. Functionally, catalyzes the conversion of UDP-4-keto-arabinose (UDP-Ara4O) to UDP-4-amino-4-deoxy-L-arabinose (UDP-L-Ara4N). The modified arabinose is attached to lipid A and is required for resistance to polymyxin and cationic antimicrobial peptides. This Sodalis glossinidius (strain morsitans) protein is UDP-4-amino-4-deoxy-L-arabinose--oxoglutarate aminotransferase.